The sequence spans 329 residues: Sulfate/thiosulfate import ATP-binding protein CysA (329 aa).

The ABC transporter domain maps to 3–237 (IEVRNVSKRF…PANDFVYHFL (235 aa)). 35-42 (GPSGCGKT) is a binding site for ATP.

It belongs to the ABC transporter superfamily. Sulfate/tungstate importer (TC 3.A.1.6) family. The complex is composed of two ATP-binding proteins (CysA), two transmembrane proteins (CysT and CysW) and a solute-binding protein (CysP).

Its subcellular location is the cell inner membrane. It catalyses the reaction sulfate(out) + ATP + H2O = sulfate(in) + ADP + phosphate + H(+). The catalysed reaction is thiosulfate(out) + ATP + H2O = thiosulfate(in) + ADP + phosphate + H(+). Functionally, part of the ABC transporter complex CysAWTP involved in sulfate/thiosulfate import. Responsible for energy coupling to the transport system. This chain is Sulfate/thiosulfate import ATP-binding protein CysA, found in Pseudomonas putida (strain ATCC 47054 / DSM 6125 / CFBP 8728 / NCIMB 11950 / KT2440).